We begin with the raw amino-acid sequence, 536 residues long: Carboxypeptidase Y homolog A (536 aa).

Residues 1-17 form the signal peptide; that stretch reads MKFFTTGLLATAALAAA. A propeptide spanning residues 18–124 is cleaved from the precursor; sequence QEQQVLQAED…KLHNYDLRVK (107 aa). 5 disulfide bridges follow: Cys-172/Cys-412, Cys-306/Cys-320, Cys-330/Cys-353, Cys-337/Cys-346, and Cys-375/Cys-382. The N-linked (GlcNAc...) asparagine glycan is linked to Asn-203. Ser-259 is an active-site residue. Asp-451 is an active-site residue. An N-linked (GlcNAc...) asparagine glycan is attached at Asn-502. Residue His-513 is part of the active site.

It belongs to the peptidase S10 family.

It localises to the vacuole. It carries out the reaction Release of a C-terminal amino acid with broad specificity.. Its function is as follows. Vacuolar carboxypeptidase involved in degradation of small peptides. Digests preferentially peptides containing an aliphatic or hydrophobic residue in P1' position, as well as methionine, leucine or phenylalanine in P1 position of ester substrate. This Trichophyton rubrum (Athlete's foot fungus) protein is Carboxypeptidase Y homolog A (cpyA).